The following is a 146-amino-acid chain: MARNVLYPLYQLGGPQLRVFRTNFFIQLVRPGTAQPEDTVQFRIPMEMTRVDLRNYLEQIYNVPVAAVRTRVQHGSNRRRDHKNVRIKKPDYKVAYVQLAHGQTFTFPDLFPEKDPRSPEPLEEELPQQRQSSDLRCPGIPSWFGL.

The tract at residues 108–138 (PDLFPEKDPRSPEPLEEELPQQRQSSDLRCP) is disordered. Residues 111–120 (FPEKDPRSPE) show a composition bias toward basic and acidic residues.

It belongs to the universal ribosomal protein uL23 family. As to quaternary structure, component of the mitochondrial ribosome large subunit (39S) which comprises a 16S rRNA and about 50 distinct proteins.

It is found in the mitochondrion. This is Large ribosomal subunit protein uL23m (Mrpl23) from Mus musculus (Mouse).